A 444-amino-acid chain; its full sequence is Ribitol-5-phosphate xylosyltransferase 1 (444 aa).

The Cytoplasmic segment spans residues 1 to 9 (MRLTRTRLC). The helical; Signal-anchor for type II membrane protein transmembrane segment at 10 to 30 (SLLVALYCLFSIYAAYHVFFG) threads the bilayer. Over 31–444 (RRRRPLGTTS…ESSFFINNKV (414 aa)) the chain is Extracellular. Residues 38–79 (TTSRNSRKAAAAQAKERRGREQSALESEEWNPWEGDEKNEQR) form a disordered region. The span at 51 to 60 (AKERRGREQS) shows a compositional bias: basic and acidic residues.

It belongs to the RXYLT1 family. Forms a complex composed of FKTN/fukutin, FKRP and RXYLT1/TMEM5.

The protein localises to the golgi apparatus membrane. The catalysed reaction is 3-O-[Rib-ol-P-Rib-ol-P-3-beta-D-GalNAc-(1-&gt;3)-beta-D-GlcNAc-(1-&gt;4)-(O-6-P-alpha-D-Man)]-Thr-[protein] + UDP-alpha-D-xylose = 3-O-[beta-D-Xyl-(1-&gt;4)-Rib-ol-P-Rib-ol-P-3-beta-D-GalNAc-(1-&gt;3)-beta-D-GlcNAc-(1-&gt;4)-(O-6-P-alpha-D-Man)]-Thr-[protein] + UDP + H(+). Its pathway is protein modification; protein glycosylation. Its function is as follows. Acts as a UDP-D-xylose:ribitol-5-phosphate beta1,4-xylosyltransferase, which catalyzes the transfer of UDP-D-xylose to ribitol 5-phosphate (Rbo5P) to form the Xylbeta1-4Rbo5P linkage on O-mannosyl glycan. Participates in the biosynthesis of the phosphorylated O-mannosyl trisaccharide (N-acetylgalactosamine-beta-3-N-acetylglucosamine-beta-4-(phosphate-6-)mannose), a carbohydrate structure present in alpha-dystroglycan (DAG1), which is required for binding laminin G-like domain-containing extracellular proteins with high affinity. In Mus musculus (Mouse), this protein is Ribitol-5-phosphate xylosyltransferase 1.